The chain runs to 246 residues: Pyridoxine 5'-phosphate synthase (246 aa).

Residues Asn-8 and Arg-19 each coordinate 3-amino-2-oxopropyl phosphate. His-44 (proton acceptor) is an active-site residue. 1-deoxy-D-xylulose 5-phosphate is bound by residues Arg-46 and His-51. The Proton acceptor role is filled by Glu-76. Thr-106 contributes to the 1-deoxy-D-xylulose 5-phosphate binding site. His-198 functions as the Proton donor in the catalytic mechanism. Residues Asp-199 and 221–222 each bind 3-amino-2-oxopropyl phosphate; that span reads GH.

The protein belongs to the PNP synthase family. Homooctamer; tetramer of dimers.

The protein localises to the cytoplasm. It catalyses the reaction 3-amino-2-oxopropyl phosphate + 1-deoxy-D-xylulose 5-phosphate = pyridoxine 5'-phosphate + phosphate + 2 H2O + H(+). It functions in the pathway cofactor biosynthesis; pyridoxine 5'-phosphate biosynthesis; pyridoxine 5'-phosphate from D-erythrose 4-phosphate: step 5/5. Functionally, catalyzes the complicated ring closure reaction between the two acyclic compounds 1-deoxy-D-xylulose-5-phosphate (DXP) and 3-amino-2-oxopropyl phosphate (1-amino-acetone-3-phosphate or AAP) to form pyridoxine 5'-phosphate (PNP) and inorganic phosphate. In Brucella abortus (strain S19), this protein is Pyridoxine 5'-phosphate synthase.